Reading from the N-terminus, the 286-residue chain is Pantothenate synthetase (286 aa).

30-37 (MGNLHRGH) contributes to the ATP binding site. The Proton donor role is filled by histidine 37. Residue glutamine 61 participates in (R)-pantoate binding. Glutamine 61 provides a ligand contact to beta-alanine. 149–152 (GEKD) serves as a coordination point for ATP. Glutamine 155 is a (R)-pantoate binding site. ATP is bound by residues valine 178 and 186–189 (LSSR).

This sequence belongs to the pantothenate synthetase family. As to quaternary structure, homodimer.

The protein resides in the cytoplasm. The enzyme catalyses (R)-pantoate + beta-alanine + ATP = (R)-pantothenate + AMP + diphosphate + H(+). The protein operates within cofactor biosynthesis; (R)-pantothenate biosynthesis; (R)-pantothenate from (R)-pantoate and beta-alanine: step 1/1. Catalyzes the condensation of pantoate with beta-alanine in an ATP-dependent reaction via a pantoyl-adenylate intermediate. This chain is Pantothenate synthetase, found in Nitrosococcus oceani (strain ATCC 19707 / BCRC 17464 / JCM 30415 / NCIMB 11848 / C-107).